Consider the following 84-residue polypeptide: U21-theraphotoxin-Cg1a 2 (84 aa).

Positions 1-21 are cleaved as a signal peptide; sequence MKVSVLITLAVLGVMFLFTSA. Residues 22–47 constitute a propeptide that is removed on maturation; it reads EERGSDQMDSPAWLKSMEIIFQSEER. Disulfide bonds link cysteine 49–cysteine 63, cysteine 56–cysteine 68, and cysteine 62–cysteine 76. Residue valine 82 is modified to Valine amide.

This sequence belongs to the neurotoxin 10 (Hwtx-1) family. 05 (F4a) subfamily. Expressed by the venom gland.

Its subcellular location is the secreted. Probable ion channel inhibitor. This chain is U21-theraphotoxin-Cg1a 2, found in Chilobrachys guangxiensis (Chinese earth tiger tarantula).